The following is a 349-amino-acid chain: Desmethyl-yatein O-methyltransferase (349 aa).

The S-adenosyl-L-homocysteine site is built by glycine 193, aspartate 216, aspartate 236, methionine 237, methionine 249, and lysine 250. Catalysis depends on histidine 254, which acts as the Proton acceptor. Active-site residues include glutamate 282 and glutamate 314.

This sequence belongs to the class I-like SAM-binding methyltransferase superfamily. Cation-independent O-methyltransferase family. COMT subfamily. Homodimer. In terms of tissue distribution, mostly expressed in stems, and, to a lower extent, in leaves.

The enzyme catalyses (-)-5'-demethylyatein + S-adenosyl-L-methionine = (-)-yatein + S-adenosyl-L-homocysteine + H(+). It functions in the pathway aromatic compound metabolism; phenylpropanoid biosynthesis. Its function is as follows. O-methyltransferase involved in the biosynthesis of etoposide, a chemotherapeutic compound of the topoisomerase inhibitor family. Catalyzes the methylation of (-)-5'-demethylyatein to produce (-)-yatein. This Sinopodophyllum hexandrum (Himalayan may apple) protein is Desmethyl-yatein O-methyltransferase.